We begin with the raw amino-acid sequence, 75 residues long: Small ribosomal subunit protein bS18 (75 aa).

It belongs to the bacterial ribosomal protein bS18 family. Part of the 30S ribosomal subunit. Forms a tight heterodimer with protein bS6.

Binds as a heterodimer with protein bS6 to the central domain of the 16S rRNA, where it helps stabilize the platform of the 30S subunit. This Dinoroseobacter shibae (strain DSM 16493 / NCIMB 14021 / DFL 12) protein is Small ribosomal subunit protein bS18.